Consider the following 326-residue polypeptide: Elongation factor Ts (326 aa).

The tract at residues 80–83 (TDFV) is involved in Mg(2+) ion dislocation from EF-Tu.

This sequence belongs to the EF-Ts family.

The protein localises to the cytoplasm. Functionally, associates with the EF-Tu.GDP complex and induces the exchange of GDP to GTP. It remains bound to the aminoacyl-tRNA.EF-Tu.GTP complex up to the GTP hydrolysis stage on the ribosome. The protein is Elongation factor Ts of Rhodopirellula baltica (strain DSM 10527 / NCIMB 13988 / SH1).